A 37-amino-acid chain; its full sequence is Potassium channel toxin alpha-KTx 15.3 (37 aa).

Glutamine 1 carries the pyrrolidone carboxylic acid modification. Intrachain disulfides connect cysteine 8-cysteine 28, cysteine 13-cysteine 33, and cysteine 17-cysteine 35.

In terms of tissue distribution, expressed by the venom gland.

The protein localises to the secreted. Inhibits A-type (Kv4) voltage-gated potassium channels of striated neurons (Ki=131 nM), probably by acting as a pore blocker. Has also been shown to block ERG1/Kv11.1/KCNH2 potassium channels (IC(50)=7.9 uM). The presence of the Kv4-associated proteins DPP6 or DPP10 is mandatory to have high-affinity blockade of Kv4.2/KCND2 and Kv4.3/KCND3 channels (80-90% inhibition at 500 nM of toxin). In contrast, the presence of the Kv4-associated protein KChIP1/KCNIP1 does not enhance the affinity blockade (only 40% inhibition at 500 nM). In adult rat brain, the toxin binds to sites in the striatum, and cerebellum. It shares the same target in rat brain than AaTX1 (AC Q867F4) and BmTX3 (AC Q8I0L5). In DPP6 knockout mice, A-type currents are about 20-fold less affected by the toxin. In rodent models of Parkinson's disease, the toxin reduces motor symptoms and emotional and cognitive symptoms. The polypeptide is Potassium channel toxin alpha-KTx 15.3 (Androctonus mauritanicus mauritanicus (Scorpion)).